The sequence spans 241 residues: Xyloglucan-specific endo-beta-1,4-glucanase A (241 aa).

A signal peptide spans 1 to 16 (MKVLALSALLSLASAA). A glycan (N-linked (GlcNAc...) asparagine) is linked at Asn-47.

It belongs to the glycosyl hydrolase 12 (cellulase H) family.

Its subcellular location is the secreted. It catalyses the reaction xyloglucan + H2O = xyloglucan oligosaccharides.. Catalyzes endohydrolysis of 1,4-beta-D-glucosidic linkages in xyloglucan with retention of the beta-configuration of the glycosyl residues. Specific for xyloglucan and does not hydrolyze other cell wall components. The polypeptide is Xyloglucan-specific endo-beta-1,4-glucanase A (xgeA) (Aspergillus niger).